Reading from the N-terminus, the 231-residue chain is GDSL lipase Rv0518 (231 aa).

Residues 1-20 (MSRPGTYVIGLTLLVGLVVG) form the signal peptide. Residue Ser-46 is the Nucleophile of the active site. Asp-205 (proton donor) is an active-site residue. The Proton acceptor role is filled by His-208.

The protein belongs to the 'GDSL' lipolytic enzyme family.

It localises to the secreted. Its subcellular location is the cell wall. The protein resides in the extracellular space. The catalysed reaction is a fatty acid ester + H2O = an aliphatic alcohol + a fatty acid + H(+). It carries out the reaction decanoate ester + H2O = decanoate + an aliphatic alcohol + H(+). It catalyses the reaction an octanoate ester + H2O = an aliphatic alcohol + octanoate + H(+). The enzyme catalyses a dodecanoate ester + H2O = an aliphatic alcohol + dodecanoate + H(+). The catalysed reaction is a tetradecanoate ester + H2O = an aliphatic alcohol + tetradecanoate + H(+). Its activity is regulated as follows. Activity is inhibited by the serine modifier phenylmethylsulfonyl fluoride (PMSF). Functionally, GDSL lipase that catalyzes the hydrolysis of p-nitrophenyl (pNP) esters. pNP-decanoate (C10) is the preferred substrate. It can also use pNP-octanoate (C8), pNP-dodecanoate (C12) and pNP-tetradecanoate (C14). Has lower activity with pNP-butyrate (C4), pNP-palmitate (C16) and pNP-stearate (C18). Does not show phospholipase A1 activity. Might help bacteria to utilize available lipids for its growth as well as provide resistance to various intracellular stresses by cell wall modulation resulting in enhanced intracellular survival. In Mycobacterium tuberculosis (strain ATCC 25618 / H37Rv), this protein is GDSL lipase Rv0518.